Reading from the N-terminus, the 684-residue chain is DNA ligase (684 aa).

NAD(+)-binding positions include 46 to 50 (DYVYD), 100 to 101 (SL), and Glu-130. Lys-132 serves as the catalytic N6-AMP-lysine intermediate. Residues Arg-153, Glu-187, Lys-303, and Lys-327 each contribute to the NAD(+) site. The Zn(2+) site is built by Cys-421, Cys-424, Cys-439, and Cys-444. One can recognise a BRCT domain in the interval 604–684 (DEKNYFFNKR…DFINLSNAKK (81 aa)).

The protein belongs to the NAD-dependent DNA ligase family. LigA subfamily. It depends on Mg(2+) as a cofactor. Mn(2+) is required as a cofactor.

The catalysed reaction is NAD(+) + (deoxyribonucleotide)n-3'-hydroxyl + 5'-phospho-(deoxyribonucleotide)m = (deoxyribonucleotide)n+m + AMP + beta-nicotinamide D-nucleotide.. Its function is as follows. DNA ligase that catalyzes the formation of phosphodiester linkages between 5'-phosphoryl and 3'-hydroxyl groups in double-stranded DNA using NAD as a coenzyme and as the energy source for the reaction. It is essential for DNA replication and repair of damaged DNA. In Oenococcus oeni (strain ATCC BAA-331 / PSU-1), this protein is DNA ligase.